We begin with the raw amino-acid sequence, 199 residues long: Recombination protein RecR (199 aa).

The C4-type zinc-finger motif lies at 57-72; sequence CSICGNITESDPCMIC. The region spanning 80 to 176 is the Toprim domain; sequence SKVVVVEQPK…KVTRLAHGLA (97 aa).

This sequence belongs to the RecR family.

In terms of biological role, may play a role in DNA repair. It seems to be involved in an RecBC-independent recombinational process of DNA repair. It may act with RecF and RecO. This is Recombination protein RecR from Ligilactobacillus salivarius (strain UCC118) (Lactobacillus salivarius).